We begin with the raw amino-acid sequence, 217 residues long: Elongation factor Ts (217 aa).

The involved in Mg(2+) ion dislocation from EF-Tu stretch occupies residues 80-83 (TDFV).

It belongs to the EF-Ts family.

The protein resides in the cytoplasm. Its function is as follows. Associates with the EF-Tu.GDP complex and induces the exchange of GDP to GTP. It remains bound to the aminoacyl-tRNA.EF-Tu.GTP complex up to the GTP hydrolysis stage on the ribosome. The protein is Elongation factor Ts of Carboxydothermus hydrogenoformans (strain ATCC BAA-161 / DSM 6008 / Z-2901).